Consider the following 1369-residue polypeptide: Mediator of RNA polymerase II transcription subunit 23 (1369 aa).

Residues 1337-1369 are disordered; sequence TESAAPPPPPMNSGSPAPQPNQVPVSVPLTVTQ. Residues 1341–1357 show a composition bias toward pro residues; sequence APPPPPMNSGSPAPQPN.

It belongs to the Mediator complex subunit 23 family. In terms of assembly, component of the Mediator complex.

It is found in the nucleus. Its function is as follows. Component of the Mediator complex, a coactivator involved in the regulated transcription of nearly all RNA polymerase II-dependent genes. Mediator functions as a bridge to convey information from gene-specific regulatory proteins to the basal RNA polymerase II transcription machinery. Mediator is recruited to promoters by direct interactions with regulatory proteins and serves as a scaffold for the assembly of a functional preinitiation complex with RNA polymerase II and the general transcription factors. The chain is Mediator of RNA polymerase II transcription subunit 23 (med23) from Xenopus laevis (African clawed frog).